Consider the following 379-residue polypeptide: MQSPEFLSASSRLTVDLTALADNWRAMNERSGKARAAAVLKADAYGLGVVHAAPALYAAGARDFFVASVEEGADLRPLVPDGRIYILAGMWPGNEELFFENDLVPIINSEEQLAVFMAALSERGDHPCVLHVDTGMNRLGLSPEEALALAHDPARPASFSPVLVMSHLACADDPGHPMNRYQLQRFREVTAAFEGVPASLANSGGVFLGADYHFDLTRPGIAVYGGEAVNGAVNPMKAVVTAEARIVQVRTVPSGGTASYGASVRFGRDSRIATVAIGYADGYHRSVSGGGVTLRQAMPSGAFGFLHGMKVPHVGRVTMDLSLFDVTDLPEAAVRAGDYIEVFGRNVVIDDVARAGGTIGYELLTSLGRRYHRTYVGGA.

Lys-41 functions as the Proton acceptor; specific for D-alanine in the catalytic mechanism. Lys-41 is subject to N6-(pyridoxal phosphate)lysine. Residue Arg-138 coordinates substrate. Tyr-260 acts as the Proton acceptor; specific for L-alanine in catalysis. Met-319 is a binding site for substrate.

This sequence belongs to the alanine racemase family. Pyridoxal 5'-phosphate is required as a cofactor.

The catalysed reaction is L-alanine = D-alanine. The protein operates within amino-acid biosynthesis; D-alanine biosynthesis; D-alanine from L-alanine: step 1/1. Functionally, catalyzes the interconversion of L-alanine and D-alanine. May also act on other amino acids. This is Alanine racemase (alr) from Rhizobium meliloti (strain 1021) (Ensifer meliloti).